The chain runs to 349 residues: N-acetyltaurine hydrolase (349 aa).

Residues histidine 26, histidine 28, glutamate 169, histidine 201, histidine 230, and aspartate 298 each coordinate a divalent metal cation.

This sequence belongs to the metallo-dependent hydrolases superfamily. Phosphotriesterase family. A divalent metal cation is required as a cofactor.

It is found in the cytoplasm. The protein localises to the cytosol. The catalysed reaction is N-acetyltaurine + H2O = taurine + acetate. It carries out the reaction N-propanoyltaurine + H2O = propanoate + taurine. The enzyme catalyses N-acetyl-L-methionine + H2O = L-methionine + acetate. It catalyses the reaction N-acetyl-L-isoleucine + H2O = L-isoleucine + acetate. The catalysed reaction is N-acetyl-L-leucine + H2O = L-leucine + acetate. It carries out the reaction N-acetyl-L-valine + H2O = L-valine + acetate. Functionally, N-acetyltaurine hydrolase that catalyzes the hydrolysis of N-acetyltaurine into taurine and acetate. PTER also acts on other N-acetyl amino acids (Met, Ile, Leu, Val) and N-propionyltaurine, but at lower rates. The protein is N-acetyltaurine hydrolase (pter) of Xenopus tropicalis (Western clawed frog).